We begin with the raw amino-acid sequence, 166 residues long: Thioredoxin, mitochondrial (166 aa).

A mitochondrion-targeting transit peptide spans 1-59 (MAQRLLLRRFLTSVISRKPPQGVWASLTSTSLQTPPYNAGGLTGTPSPARTFHTTRVCS). Residues 61–166 (TFNVQDGPDF…LEAFLKKLIG (106 aa)) enclose the Thioredoxin domain. Active-site nucleophile residues include Cys90 and Cys93. Cys90 and Cys93 are oxidised to a cystine. Position 152 is an N6-acetyllysine; alternate (Lys152). Lys152 bears the N6-succinyllysine; alternate mark.

The protein belongs to the thioredoxin family. In terms of assembly, monomer. Expressed in several tissues with the highest expression levels in heart, muscle, kidney and adrenal gland.

The protein localises to the mitochondrion. Important for the control of mitochondrial reactive oxygen species homeostasis, apoptosis regulation and cell viability. Is involved in various redox reactions including the reduction of protein disulfide bonds, through the reversible oxidation of its active center dithiol to a disulfide. The chain is Thioredoxin, mitochondrial (Txn2) from Rattus norvegicus (Rat).